The chain runs to 362 residues: Fructose-bisphosphate aldolase (362 aa).

D-glyceraldehyde 3-phosphate is bound at residue S65. The active-site Proton donor is the D112. The Zn(2+) site is built by H113, D147, E177, and H229. G230 contributes to the dihydroxyacetone phosphate binding site. H268 serves as a coordination point for Zn(2+). Dihydroxyacetone phosphate-binding positions include 269 to 271 and 290 to 293; these read GGS and NVDT.

It belongs to the class II fructose-bisphosphate aldolase family. In terms of assembly, homodimer. The cofactor is Zn(2+).

The enzyme catalyses beta-D-fructose 1,6-bisphosphate = D-glyceraldehyde 3-phosphate + dihydroxyacetone phosphate. It functions in the pathway carbohydrate degradation; glycolysis; D-glyceraldehyde 3-phosphate and glycerone phosphate from D-glucose: step 4/4. Its function is as follows. Catalyzes the aldol condensation of dihydroxyacetone phosphate (DHAP or glycerone-phosphate) with glyceraldehyde 3-phosphate (G3P) to form fructose 1,6-bisphosphate (FBP) in gluconeogenesis and the reverse reaction in glycolysis. The polypeptide is Fructose-bisphosphate aldolase (fbaA) (Aspergillus oryzae (strain ATCC 42149 / RIB 40) (Yellow koji mold)).